The sequence spans 697 residues: Elongation factor G (697 aa).

A tr-type G domain is found at Glu8 to Val282. GTP is bound by residues Ala17 to Thr24, Asp81 to His85, and Asn135 to Asp138.

This sequence belongs to the TRAFAC class translation factor GTPase superfamily. Classic translation factor GTPase family. EF-G/EF-2 subfamily.

Its subcellular location is the cytoplasm. Functionally, catalyzes the GTP-dependent ribosomal translocation step during translation elongation. During this step, the ribosome changes from the pre-translocational (PRE) to the post-translocational (POST) state as the newly formed A-site-bound peptidyl-tRNA and P-site-bound deacylated tRNA move to the P and E sites, respectively. Catalyzes the coordinated movement of the two tRNA molecules, the mRNA and conformational changes in the ribosome. This is Elongation factor G from Acetivibrio thermocellus (strain ATCC 27405 / DSM 1237 / JCM 9322 / NBRC 103400 / NCIMB 10682 / NRRL B-4536 / VPI 7372) (Clostridium thermocellum).